Here is a 430-residue protein sequence, read N- to C-terminus: DNA-binding protein cre-1 (430 aa).

Positions Met-1–Ser-19 are enriched in polar residues. 4 disordered regions span residues Met-1–Pro-77, Ile-97–Tyr-187, Ser-265–Ser-340, and Leu-357–Leu-430. Over residues Pro-30 to Pro-46 the composition is skewed to low complexity. 2 consecutive C2H2-type zinc fingers follow at residues Tyr-78–His-100 and His-106–His-130. Basic and acidic residues predominate over residues Ile-97–His-106. 2 stretches are compositionally biased toward polar residues: residues His-130–His-147 and Ala-175–Tyr-187. A compositionally biased stretch (basic and acidic residues) spans His-268–Tyr-277. Low complexity predominate over residues Pro-289–Ser-303. The span at Ser-412–Ser-422 shows a compositional bias: polar residues.

Belongs to the creA/MIG C2H2-type zinc-finger protein family.

The protein localises to the nucleus. Involved in carbon catabolite repression. Represses the transcription of a number of genes by binding to a GC-rich region in their promoter. The sequence is that of DNA-binding protein cre-1 (cre-1) from Neurospora crassa (strain ATCC 24698 / 74-OR23-1A / CBS 708.71 / DSM 1257 / FGSC 987).